Here is an 889-residue protein sequence, read N- to C-terminus: Coatomer subunit beta' (889 aa).

6 WD repeats span residues 11-41, 53-83, 95-125, 138-169, 182-214, and 226-256; these read NRSD…ELWN, VTET…RVFN, AHPD…KLWN, GHEH…KVWS, GQER…KIWD, and GHMS…KIWN. The residue at position 326 (Ser-326) is a Phosphoserine. The tract at residues 806–889 is disordered; sequence CGAEGLPGSS…AVPEPVEEES (84 aa). Residues 836-864 show a composition bias toward basic and acidic residues; the sequence is DENKEAEVEDSEFKESNSEAVEAEKKEEE. The segment covering 866-879 has biased composition (low complexity); it reads PQQQQSEQQPEQGE.

This sequence belongs to the WD repeat COPB2 family. As to quaternary structure, oligomeric complex that consists of at least the alpha, beta, beta', gamma, delta, epsilon and zeta subunits. Interacts with the ESCRT-0 subunit VPS27.

Its subcellular location is the cytoplasm. It is found in the golgi apparatus membrane. The protein localises to the cytoplasmic vesicle. The protein resides in the COPI-coated vesicle membrane. Its function is as follows. The coatomer is a cytosolic protein complex that binds to dilysine motifs and reversibly associates with Golgi non-clathrin-coated vesicles, which further mediate biosynthetic protein transport from the ER, via the Golgi up to the trans Golgi network. Coatomer complex is required for budding from Golgi membranes, and is essential for the retrograde Golgi-to-ER transport of dilysine-tagged proteins. The polypeptide is Coatomer subunit beta' (SEC27) (Saccharomyces cerevisiae (strain ATCC 204508 / S288c) (Baker's yeast)).